Consider the following 154-residue polypeptide: MAARLYCQLDPSRDVLCLRPVGAESRGRPLSGPLGTLSSPSPSAVPADHGAHLSLRGLPVCAFSSAGPCALRFTSARCMETTVNAHQILPKVLHKRTLGLPAMSTTDLEAYFKDSVFKDWEELGEEIRLKVFVLGGCRHKLVCAPAPCNFFTSA.

The mitochondrial targeting sequence stretch occupies residues 68–117 (PCALRFTSARCMETTVNAHQILPKVLHKRTLGLPAMSTTDLEAYFKDSVF).

The protein belongs to the orthohepadnavirus protein X family. May form homodimer. May interact with host CEBPA, CFLAR, CREB1, DDB1, E4F1, HBXIP, HSPD1/HSP60, NFKBIA, POLR2E and SMAD4. Interacts with host SMC5-SMC6 complex and induces its degradation. Interacts with host TRPC4AP; leading to prevent ubiquitination of TRPC4AP. Interacts with host PLSCR1; this interaction promotes ubiquitination and degradation of HBx and impairs HBx-mediated cell proliferation. In terms of processing, a fraction may be phosphorylated in insect cells and HepG2 cells, a human hepatoblastoma cell line. Phosphorylated in vitro by host protein kinase C or mitogen-activated protein kinase. N-acetylated in insect cells.

It is found in the host cytoplasm. The protein localises to the host nucleus. The protein resides in the host mitochondrion. Its function is as follows. Multifunctional protein that plays a role in silencing host antiviral defenses and promoting viral transcription. Does not seem to be essential for HBV infection. May be directly involved in development of cirrhosis and liver cancer (hepatocellular carcinoma). Most of cytosolic activities involve modulation of cytosolic calcium. The effect on apoptosis is controversial depending on the cell types in which the studies have been conducted. May induce apoptosis by localizing in mitochondria and causing loss of mitochondrial membrane potential. May also modulate apoptosis by binding host CFLAR, a key regulator of the death-inducing signaling complex (DISC). Promotes viral transcription by using the host E3 ubiquitin ligase DDB1 to target the SMC5-SMC6 complex to proteasomal degradation. This host complex would otherwise bind to viral episomal DNA, and prevents its transcription. Moderately stimulates transcription of many different viral and cellular transcription elements. Promoters and enhancers stimulated by HBx contain DNA binding sites for NF-kappa-B, AP-1, AP-2, c-EBP, ATF/CREB, or the calcium-activated factor NF-AT. In Homo sapiens (Human), this protein is Protein X.